Consider the following 137-residue polypeptide: Crustacean hyperglycemic hormones (137 aa).

The signal sequence occupies residues 1–28 (MVSFRTMWSLVVVVVVVAASLGSSGVHG). Gln64 bears the Pyrrolidone carboxylic acid mark. Phe66 is subject to D-phenylalanine; in form CHH-II. Disulfide bonds link Cys70-Cys106, Cys86-Cys102, and Cys89-Cys115. Val135 is modified (valine amide).

It belongs to the arthropod CHH/MIH/GIH/VIH hormone family. In terms of tissue distribution, produced by the medulla terminalis X-organ in the eyestalks and transported to the sinus gland where they are stored and released.

The protein resides in the secreted. In terms of biological role, hormone found in the sinus gland of isopods and decapods which controls the blood sugar level. Has a secretagogue action over the amylase released from the midgut gland. May act as a stress hormone and may be involved in the control of molting and reproduction. This Procambarus clarkii (Red swamp crayfish) protein is Crustacean hyperglycemic hormones.